We begin with the raw amino-acid sequence, 134 residues long: UPF0357 protein YCL012C (134 aa).

A signal peptide spans 1–23; that stretch reads MKSLFYLKLLLWVVLLSLCLLMA. Phosphoserine occurs at positions 71 and 74. Residue K86 forms a Glycyl lysine isopeptide (Lys-Gly) (interchain with G-Cter in ubiquitin) linkage.

Belongs to the UPF0357 family.

The protein is UPF0357 protein YCL012C of Saccharomyces cerevisiae (strain ATCC 204508 / S288c) (Baker's yeast).